The chain runs to 396 residues: Tryptophan synthase beta chain (396 aa).

Lysine 88 bears the N6-(pyridoxal phosphate)lysine mark.

Belongs to the TrpB family. Tetramer of two alpha and two beta chains. Pyridoxal 5'-phosphate serves as cofactor.

The enzyme catalyses (1S,2R)-1-C-(indol-3-yl)glycerol 3-phosphate + L-serine = D-glyceraldehyde 3-phosphate + L-tryptophan + H2O. It functions in the pathway amino-acid biosynthesis; L-tryptophan biosynthesis; L-tryptophan from chorismate: step 5/5. In terms of biological role, the beta subunit is responsible for the synthesis of L-tryptophan from indole and L-serine. The sequence is that of Tryptophan synthase beta chain from Shewanella sp. (strain ANA-3).